The following is a 379-amino-acid chain: Polycomb group protein FIE2 (379 aa).

WD repeat units follow at residues 85–128 (DKDE…LAKS), 131–171 (GHGD…CILI), 177–217 (GHRN…LYVD), 243–280 (VHSNYVDCTRWLGDFILSKSVDNEIVLWEPKTKEQSPG), 292–333 (VPEC…PVLI), and 340–378 (QCKSPIRQTAVSFDGSTILGAGEDGTIWRWDEVDHPSSR).

Belongs to the WD repeat ESC family. In terms of tissue distribution, widely expressed. Expressed in the embryo sac before pollination. After pollination, its expression persists, predominantly in the embryo and at lower levels in the endosperm.

It is found in the nucleus. Polycomb group (PcG) protein. PcG proteins act by forming multiprotein complexes, which are required to maintain the transcriptionally repressive state of homeotic genes throughout development. PcG proteins are not required to initiate repression, but to maintain it during later stages of development. They probably act via the methylation of histones, rendering chromatin heritably changed in its expressibility. In Zea mays (Maize), this protein is Polycomb group protein FIE2 (FIE2).